A 1037-amino-acid polypeptide reads, in one-letter code: MANFFIDRPIFAWVLAILLCLTGTLAIFSLPVEQYPDLAPPNVRVTANYPGASAQTLENTVTQVIEQNMTGLDNLMYMSSQSSGTGQASVTLSFKAGTDPDEAVQQVQNQLQSAMRKLPQAVQNQGVTVRKTGDTNILTIAFVSTDGSMDKQDIADYVASNIQDPLSRVNGVGDIDAYGSQYSMRIWLDPAKLNSFQMTAKDVTDAIESQNAQIAVGQLGGTPSVDKQALNATINAQSLLQTPEQFRDITLRVNQDGSEVRLGDVATVEMGAEKYDYLSRFNGKPASGLGVKLASGANEMATAELVLNRLDELAQYFPHGLEYKVAYETTSFVKASIEDVVKTLLEAIALVFLVMYLFLQNFRATLIPTIAVPVVLMGTFSVLYAFGYSVNTLTMFAMVLAIGLLVDDAIVVVENVERIMSEEGLTPREATRKSMGQIQGALVGIAMVLSAVFVPMAFFGGTTGAIYRQFSITIVAAMVLSVLVAMILTPALCATLLKPLKKGEHHGQKGFFAWFNQMFNRNAERYEKGVAKILHRSLRWIVIYVLLLGGMVFLFLRLPTSFLPLEDRGMFTTSVQLPSGSTQQQTLKVVEQIEKYYFTHEKDNIMSVFATVGSGPGGNGQNVARMFIRLKDWSERDSKTGTSFAIIERATKAFNQIKEARVIASSPPAISGLGSSAGFDMELQDHAGAGHDALMAARNQLLALAAENPELTRVRHNGLDDSPQLQIDIDQRKAQALGVAIDDINDTLQTAWGSSYVNDFMDRGRVKKVYVQAAAPYRMLPDDINLWYVRNKDGGMVPFSAFATSRWETGSPRLERYNGYSAVEIVGEAAPGVSTGTAMDIMESLVKQLPNGFGLEWTAMSYQERLSGAQAPALYAISLLVVFLCLAALYESWSVPFSVMLVVPLGVIGALLATWMRGLENDVYFQVGLLTVIGLSAKNAILIVEFANEMNQKGHDLFEATLHACRQRLRPILMTSLAFIFGVLPMATSTGAGSGGQHAVGTGVMGGMISATILAIYFVPLFFVLVRRRFPLKPRPE.

The Cytoplasmic portion of the chain corresponds to 1–9; the sequence is MANFFIDRP. Residues 10–28 form a helical membrane-spanning segment; sequence IFAWVLAILLCLTGTLAIF. Residues 29-339 lie on the Periplasmic side of the membrane; that stretch reads SLPVEQYPDL…TSFVKASIED (311 aa). A helical transmembrane segment spans residues 340–359; it reads VVKTLLEAIALVFLVMYLFL. Residues 360 to 365 are Cytoplasmic-facing; that stretch reads QNFRAT. The helical transmembrane segment at 366–385 threads the bilayer; it reads LIPTIAVPVVLMGTFSVLYA. Over 386–391 the chain is Periplasmic; it reads FGYSVN. A helical transmembrane segment spans residues 392–413; the sequence is TLTMFAMVLAIGLLVDDAIVVV. The Cytoplasmic portion of the chain corresponds to 414–441; that stretch reads ENVERIMSEEGLTPREATRKSMGQIQGA. The helical transmembrane segment at 442–460 threads the bilayer; it reads LVGIAMVLSAVFVPMAFFG. Over 461-473 the chain is Periplasmic; it reads GTTGAIYRQFSIT. The chain crosses the membrane as a helical span at residues 474–496; sequence IVAAMVLSVLVAMILTPALCATL. The Cytoplasmic portion of the chain corresponds to 497–537; that stretch reads LKPLKKGEHHGQKGFFAWFNQMFNRNAERYEKGVAKILHRS. Residues 538–556 traverse the membrane as a helical segment; sequence LRWIVIYVLLLGGMVFLFL. The Periplasmic portion of the chain corresponds to 557–870; sequence RLPTSFLPLE…SYQERLSGAQ (314 aa). Residues 871-890 form a helical membrane-spanning segment; it reads APALYAISLLVVFLCLAALY. Over 891 to 896 the chain is Cytoplasmic; that stretch reads ESWSVP. A helical membrane pass occupies residues 897 to 916; that stretch reads FSVMLVVPLGVIGALLATWM. At 917 to 922 the chain is on the periplasmic side; it reads RGLEND. The chain crosses the membrane as a helical span at residues 923–944; the sequence is VYFQVGLLTVIGLSAKNAILIV. Residues 945 to 971 lie on the Cytoplasmic side of the membrane; it reads EFANEMNQKGHDLFEATLHACRQRLRP. A helical transmembrane segment spans residues 972 to 990; it reads ILMTSLAFIFGVLPMATST. Topologically, residues 991 to 1003 are periplasmic; it reads GAGSGGQHAVGTG. A helical membrane pass occupies residues 1004–1026; that stretch reads VMGGMISATILAIYFVPLFFVLV. Residues 1027–1037 lie on the Cytoplasmic side of the membrane; the sequence is RRRFPLKPRPE.

Belongs to the resistance-nodulation-cell division (RND) (TC 2.A.6) family.

The protein resides in the cell inner membrane. Its function is as follows. Participates in the efflux of aminoglycosides. Confers resistance to a variety of these substances. The chain is Probable aminoglycoside efflux pump (acrD) from Escherichia coli (strain K12).